The sequence spans 369 residues: Glycine oxidase (369 aa).

FAD-binding positions include 14–15 (II), 34–35 (ES), 42–43 (TT), 47–49 (AGM), and valine 174. Substrate-binding residues include arginine 302 and arginine 329. 327–333 (HFRNGIL) contributes to the FAD binding site.

It belongs to the DAO family. ThiO subfamily. Homotetramer. FAD serves as cofactor.

The protein resides in the cytoplasm. The enzyme catalyses glycine + O2 + H2O = glyoxylate + H2O2 + NH4(+). It catalyses the reaction N-ethylglycine + O2 + H2O = ethylamine + glyoxylate + H2O2. The catalysed reaction is sarcosine + O2 + H2O = methylamine + glyoxylate + H2O2. It carries out the reaction D-alanine + O2 + H2O = pyruvate + H2O2 + NH4(+). The enzyme catalyses glyphosate + O2 + H2O = aminomethylphosphonate + glyoxylate + H2O2 + H(+). It participates in cofactor biosynthesis; thiamine diphosphate biosynthesis. Is competitively inhibited by glycolate. Functionally, catalyzes the FAD-dependent oxidative deamination of various amines and D-amino acids to yield the corresponding alpha-keto acids, ammonia/amine, and hydrogen peroxide. Oxidizes sarcosine (N-methylglycine), N-ethylglycine and glycine. Can also oxidize the herbicide glyphosate (N-phosphonomethylglycine). Displays lower activities on D-alanine, D-valine, D-proline and D-methionine. Does not act on L-amino acids and other D-amino acids. Is essential for thiamine biosynthesis since the oxidation of glycine catalyzed by ThiO generates the glycine imine intermediate (dehydroglycine) required for the biosynthesis of the thiazole ring of thiamine pyrophosphate. The polypeptide is Glycine oxidase (Bacillus subtilis (strain 168)).